The sequence spans 512 residues: ATP synthase subunit alpha 2 (512 aa).

Residue 169–176 (GDRQTGKT) coordinates ATP.

It belongs to the ATPase alpha/beta chains family. F-type ATPases have 2 components, CF(1) - the catalytic core - and CF(0) - the membrane proton channel. CF(1) has five subunits: alpha(3), beta(3), gamma(1), delta(1), epsilon(1). CF(0) has four main subunits: a(1), b(1), b'(1) and c(9-12).

It localises to the cell inner membrane. It carries out the reaction ATP + H2O + 4 H(+)(in) = ADP + phosphate + 5 H(+)(out). Produces ATP from ADP in the presence of a proton gradient across the membrane. The alpha chain is a regulatory subunit. The chain is ATP synthase subunit alpha 2 from Dinoroseobacter shibae (strain DSM 16493 / NCIMB 14021 / DFL 12).